A 340-amino-acid chain; its full sequence is Phenylalanine--tRNA ligase alpha subunit (340 aa).

Glu255 provides a ligand contact to Mg(2+).

Belongs to the class-II aminoacyl-tRNA synthetase family. Phe-tRNA synthetase alpha subunit type 1 subfamily. In terms of assembly, tetramer of two alpha and two beta subunits. It depends on Mg(2+) as a cofactor.

The protein resides in the cytoplasm. It catalyses the reaction tRNA(Phe) + L-phenylalanine + ATP = L-phenylalanyl-tRNA(Phe) + AMP + diphosphate + H(+). This Exiguobacterium sp. (strain ATCC BAA-1283 / AT1b) protein is Phenylalanine--tRNA ligase alpha subunit.